Here is a 157-residue protein sequence, read N- to C-terminus: RNA pyrophosphohydrolase (157 aa).

One can recognise a Nudix hydrolase domain in the interval serine 6–aspartate 149. Residues glycine 43–glycine 64 carry the Nudix box motif.

It belongs to the Nudix hydrolase family. RppH subfamily. The cofactor is a divalent metal cation.

In terms of biological role, accelerates the degradation of transcripts by removing pyrophosphate from the 5'-end of triphosphorylated RNA, leading to a more labile monophosphorylated state that can stimulate subsequent ribonuclease cleavage. This is RNA pyrophosphohydrolase from Sulfurovum sp. (strain NBC37-1).